The sequence spans 149 residues: D-aminoacyl-tRNA deacylase (149 aa).

The short motif at 137–138 (GP) is the Gly-cisPro motif, important for rejection of L-amino acids element.

This sequence belongs to the DTD family. As to quaternary structure, homodimer.

Its subcellular location is the cytoplasm. It carries out the reaction glycyl-tRNA(Ala) + H2O = tRNA(Ala) + glycine + H(+). The enzyme catalyses a D-aminoacyl-tRNA + H2O = a tRNA + a D-alpha-amino acid + H(+). Its function is as follows. An aminoacyl-tRNA editing enzyme that deacylates mischarged D-aminoacyl-tRNAs. Also deacylates mischarged glycyl-tRNA(Ala), protecting cells against glycine mischarging by AlaRS. Acts via tRNA-based rather than protein-based catalysis; rejects L-amino acids rather than detecting D-amino acids in the active site. By recycling D-aminoacyl-tRNA to D-amino acids and free tRNA molecules, this enzyme counteracts the toxicity associated with the formation of D-aminoacyl-tRNA entities in vivo and helps enforce protein L-homochirality. This chain is D-aminoacyl-tRNA deacylase, found in Halothermothrix orenii (strain H 168 / OCM 544 / DSM 9562).